We begin with the raw amino-acid sequence, 138 residues long: Putative ribonuclease VapC45 (138 aa).

Its function is as follows. Toxic component of a type II toxin-antitoxin (TA) system. An RNase. The cognate antitoxin is VapB45. The sequence is that of Putative ribonuclease VapC45 from Mycobacterium tuberculosis (strain ATCC 25618 / H37Rv).